A 150-amino-acid polypeptide reads, in one-letter code: 6,7-dimethyl-8-ribityllumazine synthase (150 aa).

5-amino-6-(D-ribitylamino)uracil contacts are provided by residues phenylalanine 11, 43–45 (VYD), and 67–69 (AVI). 72–73 (AT) is a binding site for (2S)-2-hydroxy-3-oxobutyl phosphate. The Proton donor role is filled by histidine 75. Residue leucine 100 participates in 5-amino-6-(D-ribitylamino)uracil binding. Residue arginine 115 coordinates (2S)-2-hydroxy-3-oxobutyl phosphate.

Belongs to the DMRL synthase family.

It catalyses the reaction (2S)-2-hydroxy-3-oxobutyl phosphate + 5-amino-6-(D-ribitylamino)uracil = 6,7-dimethyl-8-(1-D-ribityl)lumazine + phosphate + 2 H2O + H(+). It functions in the pathway cofactor biosynthesis; riboflavin biosynthesis; riboflavin from 2-hydroxy-3-oxobutyl phosphate and 5-amino-6-(D-ribitylamino)uracil: step 1/2. Functionally, catalyzes the formation of 6,7-dimethyl-8-ribityllumazine by condensation of 5-amino-6-(D-ribitylamino)uracil with 3,4-dihydroxy-2-butanone 4-phosphate. This is the penultimate step in the biosynthesis of riboflavin. In Pyrobaculum neutrophilum (strain DSM 2338 / JCM 9278 / NBRC 100436 / V24Sta) (Thermoproteus neutrophilus), this protein is 6,7-dimethyl-8-ribityllumazine synthase.